The sequence spans 317 residues: Acetylglutamate kinase (317 aa).

Substrate is bound by residues Gly70–Gly71, Arg92, and Asn191.

Belongs to the acetylglutamate kinase family. ArgB subfamily.

Its subcellular location is the cytoplasm. It catalyses the reaction N-acetyl-L-glutamate + ATP = N-acetyl-L-glutamyl 5-phosphate + ADP. It functions in the pathway amino-acid biosynthesis; L-arginine biosynthesis; N(2)-acetyl-L-ornithine from L-glutamate: step 2/4. Its function is as follows. Catalyzes the ATP-dependent phosphorylation of N-acetyl-L-glutamate. This chain is Acetylglutamate kinase, found in Corynebacterium glutamicum (strain R).